Here is a 377-residue protein sequence, read N- to C-terminus: Nitric oxide reductase FlRd-NAD(+) reductase (377 aa).

Belongs to the FAD-dependent oxidoreductase family. FAD serves as cofactor.

It is found in the cytoplasm. It catalyses the reaction 2 reduced [nitric oxide reductase rubredoxin domain] + NAD(+) + H(+) = 2 oxidized [nitric oxide reductase rubredoxin domain] + NADH. It functions in the pathway nitrogen metabolism; nitric oxide reduction. One of at least two accessory proteins for anaerobic nitric oxide (NO) reductase. Reduces the rubredoxin moiety of NO reductase. The chain is Nitric oxide reductase FlRd-NAD(+) reductase from Salmonella typhi.